A 540-amino-acid polypeptide reads, in one-letter code: Cytochrome P450 monooxygenase prx8 (540 aa).

The helical transmembrane segment at 50-68 (ALGAAIALFACACAYALVA) threads the bilayer. N-linked (GlcNAc...) asparagine glycosylation is present at asparagine 460. Cysteine 483 lines the heme pocket.

This sequence belongs to the cytochrome P450 family. Requires heme as cofactor.

It is found in the membrane. Its pathway is sesquiterpene biosynthesis. Functionally, cytochrome P450 monooxygenase; part of the gene cluster that mediates the biosynthesis of PR-toxin, a bicyclic sesquiterpene belonging to the eremophilane class and acting as a mycotoxin. The first step of the pathway is catalyzed by the aristolochene synthase which performs the cyclization of trans,trans-farnesyl diphosphate (FPP) to the bicyclic sesquiterpene aristolochene. Following the formation of aristolochene, the non-oxygenated aristolochene is converted to the trioxygenated intermediate eremofortin B, via 7-epi-neopetasone. This conversion appears to involve three enzymes, a hydroxysterol oxidase-like enzyme, the quinone-oxidase prx3 that forms the quinone-type-structure in the bicyclic nucleus of aristolochene with the C8-oxo group and the C-3 hydroxyl group, and the P450 monooxygenase prx9 that introduces the epoxide at the double bond between carbons 1 and 2. No monoxy or dioxy-intermediates have been reported to be released to the broth, so these three early oxidative reactions may be coupled together. Eremofortin B is further oxidized by another P450 monooxygenase, that introduces a second epoxide between carbons 7 and 11 prior to acetylation to eremofortin A by the acetyltransferase prx11. The second epoxidation may be performed by a second P450 monooxygenase. After the acetylation step, eremofortin A is converted to eremofortin C and then to PR-toxin. First the conversion of eremofortin A to eremofortin C proceeds by oxidation of the side chain of the molecule at C-12 and is catalyzed by the short-chain oxidoreductase prx1. The cytochrome P450 monooxygenase prx8 also plays a role in this step. The primary alcohol formed at C-12 is finally oxidized by the short-chain alcohol dehydrogenase prx4 that forms PR-toxin. The protein is Cytochrome P450 monooxygenase prx8 of Penicillium rubens (strain ATCC 28089 / DSM 1075 / NRRL 1951 / Wisconsin 54-1255) (Penicillium chrysogenum).